We begin with the raw amino-acid sequence, 264 residues long: S-adenosylmethionine decarboxylase proenzyme (264 aa).

Serine 112 acts as the Schiff-base intermediate with substrate; via pyruvic acid in catalysis. Serine 112 carries the pyruvic acid (Ser); by autocatalysis modification. The Proton acceptor; for processing activity role is filled by histidine 117. The active-site Proton donor; for catalytic activity is cysteine 140.

Belongs to the prokaryotic AdoMetDC family. Type 2 subfamily. As to quaternary structure, heterooctamer of four alpha and four beta chains arranged as a tetramer of alpha/beta heterodimers. Pyruvate is required as a cofactor. Is synthesized initially as an inactive proenzyme. Formation of the active enzyme involves a self-maturation process in which the active site pyruvoyl group is generated from an internal serine residue via an autocatalytic post-translational modification. Two non-identical subunits are generated from the proenzyme in this reaction, and the pyruvate is formed at the N-terminus of the alpha chain, which is derived from the carboxyl end of the proenzyme. The post-translation cleavage follows an unusual pathway, termed non-hydrolytic serinolysis, in which the side chain hydroxyl group of the serine supplies its oxygen atom to form the C-terminus of the beta chain, while the remainder of the serine residue undergoes an oxidative deamination to produce ammonia and the pyruvoyl group blocking the N-terminus of the alpha chain.

It catalyses the reaction S-adenosyl-L-methionine + H(+) = S-adenosyl 3-(methylsulfanyl)propylamine + CO2. Its pathway is amine and polyamine biosynthesis; S-adenosylmethioninamine biosynthesis; S-adenosylmethioninamine from S-adenosyl-L-methionine: step 1/1. Catalyzes the decarboxylation of S-adenosylmethionine to S-adenosylmethioninamine (dcAdoMet), the propylamine donor required for the synthesis of the polyamines spermine and spermidine from the diamine putrescine. The polypeptide is S-adenosylmethionine decarboxylase proenzyme (Salmonella agona (strain SL483)).